Reading from the N-terminus, the 235-residue chain is Claudin-16 (235 aa).

Over 1-3 (MKD) the chain is Cytoplasmic. A helical transmembrane segment spans residues 4 to 24 (LLQYAACFLAIFSTGFLIVAT). Topologically, residues 25–79 (RTDCWMVNADDSLEVSTKCRGLWWECVTNAFDGIRTCDEYDSIYAEHPLKLVVTR) are extracellular. A helical transmembrane segment spans residues 80–100 (ALMITADILAGFGFITLLLGL). Residues 101–115 (DCVKFLPDEPHIKVR) lie on the Cytoplasmic side of the membrane. Residues 116–136 (LCFVAGTVLLIAGTPGIIGSV) form a helical membrane-spanning segment. The Extracellular portion of the chain corresponds to 137–169 (WYAVDVYVERSSLVLHNIFLGIQYKFGWSCWLG). The helical transmembrane segment at 170 to 190 (MAGSLGCFLAGALLTCCLYLF) threads the bilayer. Over 191 to 235 (KDVGPERNYPYAMRKPYSTAGVSMAKSYKAPRTETAKMYAVDTRV) the chain is Cytoplasmic. The Interaction with TJP1 signature appears at 233–235 (TRV).

The protein belongs to the claudin family. In terms of assembly, can form heteropolymeric tight junction strands with other claudins. Interacts with CLDN19. Interacts (via PDZ-binding motif TRV) with TJP1 (via PDZ domain). Cannot form tight junction strands on its own.

The protein resides in the cell junction. The protein localises to the tight junction. It is found in the cell membrane. The catalysed reaction is Mg(2+)(in) = Mg(2+)(out). The enzyme catalyses Ca(2+)(in) = Ca(2+)(out). It carries out the reaction Na(+)(in) = Na(+)(out). It catalyses the reaction K(+)(in) = K(+)(out). The catalysed reaction is Rb(+)(in) = Rb(+)(out). The enzyme catalyses Cs(+)(in) = Cs(+)(out). It carries out the reaction Li(+)(in) = Li(+)(out). Forms paracellular channels: coassembles with CLDN19 into tight junction strands with cation-selective channels through the strands, conveying epithelial permeability in a process known as paracellular tight junction permeability. Involved in the maintenance of ion gradients along the nephron. In the thick ascending limb (TAL) of Henle's loop, facilitates sodium paracellular permeability from the interstitial compartment to the lumen, contributing to the lumen-positive transepithelial potential that drives paracellular magnesium and calcium reabsorption. The polypeptide is Claudin-16 (Rattus norvegicus (Rat)).